The primary structure comprises 255 residues: ATP synthase subunit a (255 aa).

A propeptide spans 1–6 (MNFIIN) (removed in mature form). Transmembrane regions (helical) follow at residues 32-52 (LTSF…FSIL), 91-111 (LFPF…VSLV), 121-141 (LIWT…TGLA), 159-200 (PLVP…LAGL), and 219-251 (LSIL…IKDA).

As to quaternary structure, F-type ATP synthases have 2 components, the catalytic core F(1) and the membrane-embedded component F(0), linked together by a central stalk and a peripheral stalk. The central stalk, also called rotor shaft, is often seen as part of F(1). The peripheral stalk is seen as part of F(0). F(0) contains the membrane channel next to the rotor. F-type ATP synthases form dimers but each monomer functions independently in ATP generation. The dimer consists of 17 different polypeptides: ATP1 (subunit alpha, 3 molecules per monomer, part of F(1)), ATP2 (subunit beta, 3 copies per monomer, part of F(1)), ATP3 (subunit gamma, part of the central stalk), ATP4 (subunit b, part of the peripheral stalk), ATP5/OSCP (subunit 5/OSCP, part of the peripheral stalk), ATP6 (subunit a, part of the peripheral stalk), ATP7 (subunit d, part of the peripheral stalk), ATP8 (subunit 8, part of the peripheral stalk), OLI1 (subunit c, part of the rotor, 10 molecules per monomer), ATP14 (subunit h, part of the peripheral stalk), ATP15 (subunit epsilon, part of the central stalk), ATP16 (subunit delta, part of the central stalk), ATP17 (subunit f, part of the peripheral stalk), ATP18 (subunit i/j, part of the peripheral stalk), ATP19 (subunit k, dimer-specific, at interface between monomers), ATP20 (subunit g, at interface between monomers), TIM11 (subunit e, at interface between monomers).

The protein localises to the mitochondrion inner membrane. Its function is as follows. Mitochondrial membrane ATP synthase (F(1)F(0) ATP synthase or Complex V) produces ATP from ADP in the presence of a proton gradient across the membrane which is generated by electron transport complexes of the respiratory chain. F-type ATP synthases consist of two structural domains, F(1) - containing the extramembraneous catalytic core, and F(0) - containing the membrane proton channel, linked together by a central stalk and a peripheral stalk. During catalysis, ATP synthesis in the catalytic domain of F(1) is coupled via a rotary mechanism of the central stalk subunits to proton translocation. Key component of the proton channel; it may play a direct role in the translocation of protons across the membrane. The polypeptide is ATP synthase subunit a (Yarrowia lipolytica (strain CLIB 122 / E 150) (Yeast)).